A 110-amino-acid chain; its full sequence is Large ribosomal subunit protein uL22 (110 aa).

Belongs to the universal ribosomal protein uL22 family. In terms of assembly, part of the 50S ribosomal subunit.

In terms of biological role, this protein binds specifically to 23S rRNA; its binding is stimulated by other ribosomal proteins, e.g. L4, L17, and L20. It is important during the early stages of 50S assembly. It makes multiple contacts with different domains of the 23S rRNA in the assembled 50S subunit and ribosome. The globular domain of the protein is located near the polypeptide exit tunnel on the outside of the subunit, while an extended beta-hairpin is found that lines the wall of the exit tunnel in the center of the 70S ribosome. The sequence is that of Large ribosomal subunit protein uL22 from Acinetobacter baumannii (strain ACICU).